A 192-amino-acid chain; its full sequence is Leucine-rich repeat-containing protein 51 (192 aa).

3 LRR repeats span residues 49–71 (SLTQ…NQVA), 80–101 (NLAW…LTTF), and 103–124 (NLSV…NKLA). Positions 137 to 175 (NPMEEEKGYRQYVLCTLSRITTFDFSGVTKADRTTAEVW) constitute an LRRCT domain.

The protein localises to the cytoplasm. This is Leucine-rich repeat-containing protein 51 from Homo sapiens (Human).